The following is a 95-amino-acid chain: Small ribosomal subunit protein uS19 (95 aa).

A disordered region spans residues 75 to 95 (APTRSFRGHGGKKADKRGKMK). Residues 80 to 95 (FRGHGGKKADKRGKMK) are compositionally biased toward basic residues.

It belongs to the universal ribosomal protein uS19 family.

In terms of biological role, protein S19 forms a complex with S13 that binds strongly to the 16S ribosomal RNA. This chain is Small ribosomal subunit protein uS19, found in Roseiflexus sp. (strain RS-1).